The following is a 429-amino-acid chain: Protein ABERRANT PANICLE ORGANIZATION 1 (429 aa).

Positions 1–11 are enriched in pro residues; the sequence is MMNPRRLPPLP. The interval 1–21 is disordered; the sequence is MMNPRRLPPLPSSTSSASAAD. The region spanning 25-71 is the F-box domain; it reads PRVWRRLPQPLVDRILACLPTPSFLRLRAACRRFYHLLFSSPFLHSH. Transmembrane regions (helical) follow at residues 72 to 92 and 112 to 132; these read LLLS…GHLL and VAGG…LAFL. 3 Kelch repeats span residues 229–277, 284–339, and 350–397; these read MAFA…ELGG, RVAL…AEGG, and YVVL…GAAG.

As to quaternary structure, part of a putative SCF (ASK/Cullin/F-box) ubiquitin ligase complex. Interacts with FL/APO2. As to expression, expressed in apical meristems and the lateral organ primordia throughout development. Expressed in seedlings, roots, leaves, shoot apical meristem (SAM), developing panicles, and, at lower levels, in developing seeds.

It localises to the membrane. Its pathway is protein modification; protein ubiquitination. Component of SCF(ASK-cullin-F-box) E3 ubiquitin ligase complexes, which may mediate the ubiquitination and subsequent proteasomal degradation of target proteins. Together with FL/APO2, involved in the temporal regulation of meristem identity during both vegetative and reproductive developments in an APO2-dependent manner. Promotes spikelet formation by suppressing the precocious conversion of inflorescence meristems to spikelet meristems, probably via a positive regulation of class-C floral homeotic genes, but not of class-B genes, and through the control of cell proliferation in meristems. Mediates culm development and strength/diameter enhancement at internodes. Required for the regulation of the plastochron, floral organ identity, and floral determinacy. Controls the number of primary rachis branches (PRBs). May trigger the formation of vascular bundle systems which, consequently, promote carbohydrate translocation to panicles. Involved in ozone-induced grain yield regulation. The chain is Protein ABERRANT PANICLE ORGANIZATION 1 from Oryza sativa subsp. japonica (Rice).